Reading from the N-terminus, the 181-residue chain is Large ribosomal subunit protein uL5 (181 aa).

It belongs to the universal ribosomal protein uL5 family. As to quaternary structure, part of the 50S ribosomal subunit; part of the 5S rRNA/L5/L18/L25 subcomplex. Contacts the 5S rRNA and the P site tRNA. Forms a bridge to the 30S subunit in the 70S ribosome.

This is one of the proteins that bind and probably mediate the attachment of the 5S RNA into the large ribosomal subunit, where it forms part of the central protuberance. In the 70S ribosome it contacts protein S13 of the 30S subunit (bridge B1b), connecting the 2 subunits; this bridge is implicated in subunit movement. Contacts the P site tRNA; the 5S rRNA and some of its associated proteins might help stabilize positioning of ribosome-bound tRNAs. The chain is Large ribosomal subunit protein uL5 from Trichodesmium erythraeum (strain IMS101).